The primary structure comprises 140 residues: Putative pre-16S rRNA nuclease (140 aa).

This sequence belongs to the YqgF nuclease family.

The protein resides in the cytoplasm. Could be a nuclease involved in processing of the 5'-end of pre-16S rRNA. The sequence is that of Putative pre-16S rRNA nuclease from Aeromonas salmonicida (strain A449).